Consider the following 511-residue polypeptide: Fas-activated serine/threonine kinase (511 aa).

Residues 439-497 (VVLMLRERWHFCRDGRVLLGSRALRERHLGLMGYQLLPLPFEELESQRGLPQLKSYLRQ) form the RAP domain.

This sequence belongs to the FAST protein kinase family. Interacts with TIA1; the interactions leads to TIA1 phosphorylation. Interacts with TIAR. Autophosphorylated on serine/threonine residues. Activated by dephosphorylation.

It is found in the mitochondrion matrix. It carries out the reaction L-seryl-[Fas-activated protein] + ATP = O-phospho-L-seryl-[Fas-activated protein] + ADP + H(+). The enzyme catalyses L-threonyl-[Fas-activated protein] + ATP = O-phospho-L-threonyl-[Fas-activated protein] + ADP + H(+). It catalyses the reaction L-seryl-[protein] + ATP = O-phospho-L-seryl-[protein] + ADP + H(+). The catalysed reaction is L-threonyl-[protein] + ATP = O-phospho-L-threonyl-[protein] + ADP + H(+). Phosphorylates the splicing regulator TIA1, thereby promoting the inclusion of FAS exon 6, which leads to an mRNA encoding a pro-apoptotic form of the receptor. Required for the biogenesis of some mitochondrial-encoded mRNAs, specifically stabilizes ND6 (NADH dehydrogenase complex subunit 6) mRNA, and regulates its levels. In Mus musculus (Mouse), this protein is Fas-activated serine/threonine kinase (Fastk).